We begin with the raw amino-acid sequence, 291 residues long: Elongation factor Ts (291 aa).

An involved in Mg(2+) ion dislocation from EF-Tu region spans residues T78–V81.

This sequence belongs to the EF-Ts family.

It localises to the cytoplasm. Functionally, associates with the EF-Tu.GDP complex and induces the exchange of GDP to GTP. It remains bound to the aminoacyl-tRNA.EF-Tu.GTP complex up to the GTP hydrolysis stage on the ribosome. In Ureaplasma urealyticum serovar 10 (strain ATCC 33699 / Western), this protein is Elongation factor Ts.